The chain runs to 103 residues: c-Myc-binding protein (103 aa).

The protein belongs to the AMY1 family. In terms of assembly, binds via its C-terminal region to the N-terminal region of MYC. Associates with AKAP1/S-AKAP84. Interacts with MYCBPAP. Interacts with CFAP91.

The protein localises to the cytoplasm. It is found in the nucleus. Its function is as follows. May control the transcriptional activity of MYC. Stimulates the activation of E box-dependent transcription by MYC. The protein is c-Myc-binding protein (Mycbp) of Mus musculus (Mouse).